Here is a 341-residue protein sequence, read N- to C-terminus: Type II restriction enzyme BgcI specificity subunit S.BcgI (341 aa).

The protein belongs to the type-I restriction system S methylase family. As to quaternary structure, heterotrimer of two A and one B subunit. Both subunits are necessary for DNA-binding, which is sequence non-specific. It depends on Mg(2+) as a cofactor.

The enzyme catalyses Endonucleolytic cleavage of DNA to give specific double-stranded fragments with terminal 5'-phosphates.. DNA restriction requires S-adenosyl-L-methionine and Mg(2+), and is inhibited by S-adenosyl-homocysteine. SAM may be a cofactor for DNA restriction. The specificity subunit. A B, G, H and S subtype restriction enzyme that recognizes the double-stranded sequence 5'-CGAN(6)TGC-3' and cleaves bilaterally and symmetrically 10 base pairs upstream and 12 base pairs downstream of the sequence to release a 34-base pair fragment. Methylation of the recognition sequence occurs on the adenine in either one or both strands; seems to methylate restricted DNA. This subunit degrades DNA in a non-specific manner. This Heyndrickxia coagulans (Weizmannia coagulans) protein is Type II restriction enzyme BgcI specificity subunit S.BcgI.